We begin with the raw amino-acid sequence, 332 residues long: Glycerol-3-phosphate dehydrogenase [NAD(P)+] (332 aa).

3 residues coordinate NADPH: Trp-11, Arg-30, and Lys-108. Residues Lys-108, Gly-137, and Ser-139 each contribute to the sn-glycerol 3-phosphate site. Ala-141 contributes to the NADPH binding site. Residues Lys-192, Asp-245, Ser-255, Arg-256, and Asn-257 each coordinate sn-glycerol 3-phosphate. Lys-192 serves as the catalytic Proton acceptor. Residue Arg-256 participates in NADPH binding. Positions 280 and 282 each coordinate NADPH.

Belongs to the NAD-dependent glycerol-3-phosphate dehydrogenase family.

The protein localises to the cytoplasm. The enzyme catalyses sn-glycerol 3-phosphate + NAD(+) = dihydroxyacetone phosphate + NADH + H(+). It catalyses the reaction sn-glycerol 3-phosphate + NADP(+) = dihydroxyacetone phosphate + NADPH + H(+). The protein operates within membrane lipid metabolism; glycerophospholipid metabolism. In terms of biological role, catalyzes the reduction of the glycolytic intermediate dihydroxyacetone phosphate (DHAP) to sn-glycerol 3-phosphate (G3P), the key precursor for phospholipid synthesis. This chain is Glycerol-3-phosphate dehydrogenase [NAD(P)+], found in Burkholderia orbicola (strain AU 1054).